The following is a 506-amino-acid chain: Deoxyguanosinetriphosphate triphosphohydrolase (506 aa).

The 209-residue stretch at 66 to 274 folds into the HD domain; that stretch reads RLTHSLEVQQ…MEAADDISYC (209 aa).

This sequence belongs to the dGTPase family. Type 1 subfamily. In terms of assembly, homotetramer. The cofactor is Mg(2+).

It carries out the reaction dGTP + H2O = 2'-deoxyguanosine + triphosphate + H(+). In terms of biological role, dGTPase preferentially hydrolyzes dGTP over the other canonical NTPs. The chain is Deoxyguanosinetriphosphate triphosphohydrolase from Yersinia pseudotuberculosis serotype O:3 (strain YPIII).